The sequence spans 378 residues: tRNA-specific 2-thiouridylase MnmA (378 aa).

ATP contacts are provided by residues 9 to 16 (GVSGGVDS) and Met35. An interaction with target base in tRNA region spans residues 94–96 (NPD). Residue Cys99 is the Nucleophile of the active site. Cys99 and Cys195 are joined by a disulfide. Gly123 is an ATP binding site. An interaction with tRNA region spans residues 145 to 147 (KDQ). Cys195 serves as the catalytic Cysteine persulfide intermediate. Positions 307-308 (RY) are interaction with tRNA.

The protein belongs to the MnmA/TRMU family.

The protein resides in the cytoplasm. It carries out the reaction S-sulfanyl-L-cysteinyl-[protein] + uridine(34) in tRNA + AH2 + ATP = 2-thiouridine(34) in tRNA + L-cysteinyl-[protein] + A + AMP + diphosphate + H(+). Catalyzes the 2-thiolation of uridine at the wobble position (U34) of tRNA, leading to the formation of s(2)U34. This chain is tRNA-specific 2-thiouridylase MnmA, found in Xanthomonas euvesicatoria pv. vesicatoria (strain 85-10) (Xanthomonas campestris pv. vesicatoria).